Here is a 347-residue protein sequence, read N- to C-terminus: S-adenosylmethionine:tRNA ribosyltransferase-isomerase (347 aa).

The protein belongs to the QueA family. Monomer.

It localises to the cytoplasm. The enzyme catalyses 7-aminomethyl-7-carbaguanosine(34) in tRNA + S-adenosyl-L-methionine = epoxyqueuosine(34) in tRNA + adenine + L-methionine + 2 H(+). Its pathway is tRNA modification; tRNA-queuosine biosynthesis. Functionally, transfers and isomerizes the ribose moiety from AdoMet to the 7-aminomethyl group of 7-deazaguanine (preQ1-tRNA) to give epoxyqueuosine (oQ-tRNA). The protein is S-adenosylmethionine:tRNA ribosyltransferase-isomerase of Streptococcus thermophilus (strain ATCC BAA-491 / LMD-9).